The sequence spans 91 residues: Cell division topological specificity factor (91 aa).

It belongs to the MinE family.

Its function is as follows. Prevents the cell division inhibition by proteins MinC and MinD at internal division sites while permitting inhibition at polar sites. This ensures cell division at the proper site by restricting the formation of a division septum at the midpoint of the long axis of the cell. The sequence is that of Cell division topological specificity factor from Erwinia tasmaniensis (strain DSM 17950 / CFBP 7177 / CIP 109463 / NCPPB 4357 / Et1/99).